The primary structure comprises 452 residues: Tubulin alpha-1 chain (452 aa).

A GTP-binding site is contributed by Gln-11. Position 40 is an N6-acetyllysine (Lys-40). Residues Glu-71, Gly-144, Thr-145, Thr-179, Asn-206, and Asn-228 each contribute to the GTP site. Residue Glu-71 coordinates Mg(2+). Glu-254 is a catalytic residue. The interval 430 to 452 (KDYEEVGAESGDGDDDGLGEEEY) is disordered. Acidic residues predominate over residues 431-452 (DYEEVGAESGDGDDDGLGEEEY).

This sequence belongs to the tubulin family. In terms of assembly, dimer of alpha and beta chains. A typical microtubule is a hollow water-filled tube with an outer diameter of 25 nm and an inner diameter of 15 nM. Alpha-beta heterodimers associate head-to-tail to form protofilaments running lengthwise along the microtubule wall with the beta-tubulin subunit facing the microtubule plus end conferring a structural polarity. Microtubules usually have 13 protofilaments but different protofilament numbers can be found in some organisms and specialized cells. The cofactor is Mg(2+). In terms of processing, undergoes a tyrosination/detyrosination cycle, the cyclic removal and re-addition of a C-terminal tyrosine residue by the enzymes tubulin tyrosine carboxypeptidase (TTCP) and tubulin tyrosine ligase (TTL), respectively. Acetylation of alpha chains at Lys-40 stabilizes microtubules and affects affinity and processivity of microtubule motors. This modification has a role in multiple cellular functions, ranging from cell motility, cell cycle progression or cell differentiation to intracellular trafficking and signaling.

The protein resides in the cytoplasm. The protein localises to the cytoskeleton. The catalysed reaction is GTP + H2O = GDP + phosphate + H(+). In terms of biological role, tubulin is the major constituent of microtubules, a cylinder consisting of laterally associated linear protofilaments composed of alpha- and beta-tubulin heterodimers. Microtubules grow by the addition of GTP-tubulin dimers to the microtubule end, where a stabilizing cap forms. Below the cap, tubulin dimers are in GDP-bound state, owing to GTPase activity of alpha-tubulin. The chain is Tubulin alpha-1 chain (TUBA1) from Pisum sativum (Garden pea).